A 181-amino-acid polypeptide reads, in one-letter code: Shikimate kinase (181 aa).

17–22 is a binding site for ATP; the sequence is GVGKTT. Thr21 is a binding site for Mg(2+). 3 residues coordinate substrate: Asp39, Arg63, and Gly85. Position 122 (Arg122) interacts with ATP. A substrate-binding site is contributed by Arg141.

Belongs to the shikimate kinase family. In terms of assembly, monomer. Mg(2+) serves as cofactor.

The protein localises to the cytoplasm. It catalyses the reaction shikimate + ATP = 3-phosphoshikimate + ADP + H(+). It functions in the pathway metabolic intermediate biosynthesis; chorismate biosynthesis; chorismate from D-erythrose 4-phosphate and phosphoenolpyruvate: step 5/7. Catalyzes the specific phosphorylation of the 3-hydroxyl group of shikimic acid using ATP as a cosubstrate. This is Shikimate kinase from Nostoc punctiforme (strain ATCC 29133 / PCC 73102).